A 607-amino-acid polypeptide reads, in one-letter code: Cytosolic Fe-S cluster assembly factor NAR1 (607 aa).

Residues Cys-20, Cys-82, Cys-85, Cys-88, Cys-204, and Cys-259 each contribute to the [4Fe-4S] cluster site. Positions 430-476 are disordered; sequence KPNTGKSTNTTTTTTKSKVNPLAARRRARIANNRGKPETKSTSEVNS. Over residues 432–447 the composition is skewed to low complexity; sequence NTGKSTNTTTTTTKSK. [4Fe-4S] cluster contacts are provided by Cys-496 and Cys-500.

Belongs to the NARF family.

In terms of biological role, component of the cytosolic Fe/S protein assembly machinery. Required for maturation of extramitochondrial Fe/S proteins. May play a role in the transfer of pre-assembled Fe/S clusters to target apoproteins. This is Cytosolic Fe-S cluster assembly factor NAR1 (NAR1) from Candida albicans (strain SC5314 / ATCC MYA-2876) (Yeast).